Reading from the N-terminus, the 74-residue chain is MGGISIWQLLIIVAIIVLLFGTKKLRTLGTDLGESVKGFKKAMAEDKSQDANFDKVEAKESTSTTEKTKEKEQA.

A helical membrane pass occupies residues 1-21; it reads MGGISIWQLLIIVAIIVLLFG. The segment at 51–74 is disordered; the sequence is ANFDKVEAKESTSTTEKTKEKEQA.

The protein belongs to the TatA/E family. The Tat system comprises two distinct complexes: a TatABC complex, containing multiple copies of TatA, TatB and TatC subunits, and a separate TatA complex, containing only TatA subunits. Substrates initially bind to the TatABC complex, which probably triggers association of the separate TatA complex to form the active translocon.

The protein localises to the cell inner membrane. Its function is as follows. Part of the twin-arginine translocation (Tat) system that transports large folded proteins containing a characteristic twin-arginine motif in their signal peptide across membranes. TatA could form the protein-conducting channel of the Tat system. This Haemophilus ducreyi (strain 35000HP / ATCC 700724) protein is Sec-independent protein translocase protein TatA.